Consider the following 297-residue polypeptide: PIH1 domain-containing protein 1 (297 aa).

The protein belongs to the PIH1 family.

It is found in the nucleus. Functionally, involved in the assembly of C/D box small nucleolar ribonucleoprotein (snoRNP) particles. Recruits the SWI/SNF complex to the core promoter of rRNA genes and enhances pre-rRNA transcription. Mediates interaction of TELO2 with the R2TP complex which is necessary for the stability of MTOR and SMG1. Positively regulates the assembly and activity of the mTORC1 complex. This is PIH1 domain-containing protein 1 (pih1d1) from Xenopus laevis (African clawed frog).